A 1312-amino-acid chain; its full sequence is MISNPSETKVSNFDDFSVFDVTPDPDELARKHKKPNDHGSVSIKELYRYAGFIDYILLIGGIIGAMAAGVLQPMQMLVMGDMMDTFDTSSMQNMDFSNISKAEQIEMNYELTASVADTINDLVLKMIYFAIGTTVGMFLMHFCFFVLSERQGIKIRMLYFRALLRQDAGWYDFHESGELTSRIASDVQQIQDGMSQKFGVLFQTICGFIAGYAIGFSKCWDLTLVIMAVTPFMLITVLFLGFFATKFTAKGENSLSDAGAIAEATIGNMRTVQSLGQEHEFADAYDKKMDSIKKYYILRAQVVGVGLGMLLFFMMGSLALGSWYGSLVIRGKGASKDCSAGTVMVVFMSVLMATMSIAQVAMPINALSTAQAAAYRIYQTIDRIPDIDCRSTAGLVPTECIGNIKLEDVQFRYPTRPNKQILGGLDLEIKKGETVALVGASGCGKSTTIQLVQRVYDPVGGKVTLDGNDLRELNLKWLRNQIGLVGQEPILFACTIRENIMLGAKDGETPTEEEMIECAKMANAHEFISHLPEGYDTMVGERGAALSGGQKQRIAIARALIRKPTILLLDEATSALDTQSEKIVQQALEKASQGRTTIIVAHRLTTVRNANRICVFHQGEIIEQGTHQELMDLKATYYGLVKRQSMEEEVDQETVENDLKKFREQEDKEAEQGILHKEESSTLESSDVVERLTKEYEAETKYLKHSNRFVLLRVLLNNFRHEWLLSFLGLIGGIGAGAVFPFYMIQFIGLLMTLMGMSPDVEPTTEQLHTVRNKCIWILLFGLAVFVTTYMYLGLFLSAGEKMIVRLRKLLYSALLRQNISYYDRKENMVGKVTTRLASDPTTLKGISGERVGNVVNTLSSVGFGVGIAFYYDWKVALCVMAIAPVLIVIVFLNGKLNSIQSSPATAAYEQSGITLVEAVESIKTVQSLTREDFFYNKFAADLKRPKKNILRWGPTLAFVSAANTFVTSCISAYSFYIGTYLIKKKSDYNMEFLPFTAQFMDSFTKMQKAMMSIMMAANSCGNLGQMIPDVGKAIEAAKNTFDVLDRKPSIDCYSEEGETFNDVKGEIEFKDICFRYPTRPDNAVLKGISFKAEQGKTIALVGASGCGKSTSIQLIERFYDPTYGDVLLDGHNIKDLNIHFLRSQIGMVGQEPVLFAESVIDNIRRGVPKGVEVSNEQIYAAAKMANAHDFISAMPEGYNTMVGDRGAQISGGQKQRIAIARALIRNPKVLLLDEATSALDSESEKIVQDALDKAAKGRTTIVIAHRLSTIQNADQICVIMRGKIAERGTHQELIDLKGFYYTLAMQQFGTV.

The helical transmembrane segment at glycine 51–leucine 71 threads the bilayer. Positions isoleucine 59–threonine 369 constitute an ABC transmembrane type-1 1 domain. N-linked (GlcNAc...) asparagine glycosylation is present at asparagine 98. 5 helical membrane passes run isoleucine 127 to leucine 147, lysine 197 to serine 217, leucine 224 to alanine 244, valine 302 to serine 322, and methionine 344 to isoleucine 364. The region spanning isoleucine 404–arginine 643 is the ABC transporter 1 domain. Residue glycine 439–serine 446 participates in ATP binding. The ABC transmembrane type-1 2 domain maps to leucine 724–lysine 1033. Transmembrane regions (helical) follow at residues leucine 725–isoleucine 745 and isoleucine 776–phenylalanine 796. N-linked (GlcNAc...) asparagine glycosylation is present at asparagine 819. 3 consecutive transmembrane segments (helical) span residues valine 852–tyrosine 872, tryptophan 874–asparagine 894, and alanine 958–isoleucine 978. Residues isoleucine 1068 to glutamine 1307 form the ABC transporter 2 domain. Residue glycine 1103–serine 1110 participates in ATP binding.

This sequence belongs to the ABC transporter superfamily. ABCB family. Multidrug resistance exporter (TC 3.A.1.201) subfamily.

The protein localises to the membrane. It catalyses the reaction ATP + H2O + xenobioticSide 1 = ADP + phosphate + xenobioticSide 2.. Energy-dependent efflux pump responsible for decreased drug accumulation in multidrug resistance parasites. The polypeptide is Multidrug resistance protein 3 (Entamoeba histolytica (strain ATCC 30459 / HM-1:IMSS / ABRM)).